Reading from the N-terminus, the 376-residue chain is Chaperone protein DnaJ (376 aa).

One can recognise a J domain in the interval 4 to 70 (DYYQILGVSK…QKRAAYDRFG (67 aa)). A CR-type zinc finger spans residues 139-217 (GVEKNISFSS…CHGLGRYHKQ (79 aa)). 8 residues coordinate Zn(2+): cysteine 152, cysteine 155, cysteine 169, cysteine 172, cysteine 191, cysteine 194, cysteine 205, and cysteine 208. 4 CXXCXGXG motif repeats span residues 152–159 (CDTCHGSG), 169–176 (CDACGGVG), 191–198 (CHKCQGNG), and 205–212 (CKKCHGLG).

It belongs to the DnaJ family. Homodimer. The cofactor is Zn(2+).

The protein resides in the cytoplasm. In terms of biological role, participates actively in the response to hyperosmotic and heat shock by preventing the aggregation of stress-denatured proteins and by disaggregating proteins, also in an autonomous, DnaK-independent fashion. Unfolded proteins bind initially to DnaJ; upon interaction with the DnaJ-bound protein, DnaK hydrolyzes its bound ATP, resulting in the formation of a stable complex. GrpE releases ADP from DnaK; ATP binding to DnaK triggers the release of the substrate protein, thus completing the reaction cycle. Several rounds of ATP-dependent interactions between DnaJ, DnaK and GrpE are required for fully efficient folding. Also involved, together with DnaK and GrpE, in the DNA replication of plasmids through activation of initiation proteins. This is Chaperone protein DnaJ from Rickettsia bellii (strain RML369-C).